Reading from the N-terminus, the 131-residue chain is uncharacterized protein (131 aa).

The HTH hxlR-type domain occupies 26-124; that stretch reads CSVEVAVNEI…WGKMYGSHQE (99 aa).

This is an uncharacterized protein from Methanothermobacter thermautotrophicus (strain ATCC 29096 / DSM 1053 / JCM 10044 / NBRC 100330 / Delta H) (Methanobacterium thermoautotrophicum).